The chain runs to 717 residues: Delta-1-pyrroline-5-carboxylate synthase A (717 aa).

A glutamate 5-kinase region spans residues 1–296; it reads MEELDRSRAF…WAPITDSNAR (296 aa). 3 residues coordinate substrate: Ser60, Asp157, and Asn176. Residues 196-197 and 236-242 contribute to the ATP site; these read SD and RGGMTAK. The segment at 297–717 is gamma-glutamyl phosphate reductase; that stretch reads DMAVAARESS…YTHQDIPIQA (421 aa).

This sequence in the N-terminal section; belongs to the glutamate 5-kinase family. It in the C-terminal section; belongs to the gamma-glutamyl phosphate reductase family.

The catalysed reaction is L-glutamate + ATP = L-glutamyl 5-phosphate + ADP. It carries out the reaction L-glutamate 5-semialdehyde + phosphate + NADP(+) = L-glutamyl 5-phosphate + NADPH + H(+). It functions in the pathway amino-acid biosynthesis; L-proline biosynthesis; L-glutamate 5-semialdehyde from L-glutamate: step 1/2. It participates in amino-acid biosynthesis; L-proline biosynthesis; L-glutamate 5-semialdehyde from L-glutamate: step 2/2. Functionally, P5CS plays a key role in proline biosynthesis, leading to osmoregulation in plants. In Arabidopsis thaliana (Mouse-ear cress), this protein is Delta-1-pyrroline-5-carboxylate synthase A (P5CSA).